The sequence spans 402 residues: mRNA-capping enzyme subunit alpha (402 aa).

The active-site N6-GMP-lysine intermediate is the Lys66.

Belongs to the eukaryotic GTase family. In terms of assembly, heterodimer. The mRNA-capping enzyme is composed of two separate chains alpha and beta, respectively a mRNA guanylyltransferase and an mRNA 5'-triphosphate monophosphatase.

Its subcellular location is the nucleus. It catalyses the reaction a 5'-end diphospho-ribonucleoside in mRNA + GTP + H(+) = a 5'-end (5'-triphosphoguanosine)-ribonucleoside in mRNA + diphosphate. Second step of mRNA capping. Transfer of the GMP moiety of GTP to the 5'-end of RNA via an enzyme-GMP covalent reaction intermediate. The protein is mRNA-capping enzyme subunit alpha (rnp-2) of Neurospora crassa (strain ATCC 24698 / 74-OR23-1A / CBS 708.71 / DSM 1257 / FGSC 987).